We begin with the raw amino-acid sequence, 294 residues long: Non-selective voltage-gated ion channel VDAC2 (294 aa).

N-acetylalanine is present on A2. ATP contacts are provided by K23 and K31. K31 is subject to N6-acetyllysine; alternate. K31 carries the post-translational modification N6-succinyllysine; alternate. Residue K31 forms a Glycyl lysine isopeptide (Lys-Gly) (interchain with G-Cter in ubiquitin); alternate linkage. The next 2 beta stranded transmembrane spans lie at L37–S46 and V50–S58. A Glycyl lysine isopeptide (Lys-Gly) (interchain with G-Cter in ubiquitin) cross-link involves residue K64. A beta stranded membrane pass occupies residues V65–W75. A Phosphotyrosine modification is found at Y78. A run of 3 beta stranded transmembrane segments spans residues L80–N87, T91–D100, and L106–S115. At T118 the chain carries Phosphothreonine. K120 bears the N6-acetyllysine; alternate mark. K120 participates in a covalent cross-link: Glycyl lysine isopeptide (Lys-Gly) (interchain with G-Cter in ubiquitin); alternate. K121 participates in a covalent cross-link: Glycyl lysine isopeptide (Lys-Gly) (interchain with G-Cter in ubiquitin). 4 beta stranded membrane passes run S122–R131, V134–D141, A148–G156, and L161–D169. A Glycyl lysine isopeptide (Lys-Gly) (interchain with G-Cter in ubiquitin) cross-link involves residue K172. A run of 6 beta stranded transmembrane segments spans residues K174–T186, F189–N196, E200–V209, L213–T222, R229–L238, and A242–N249. S251 bears the Phosphoserine mark. NAD(+) contacts are provided by residues L253–G255 and S271–D275. 2 beta stranded membrane passes run L253–L262 and G265–V274. K277 carries the post-translational modification N6-acetyllysine; alternate. K277 participates in a covalent cross-link: Glycyl lysine isopeptide (Lys-Gly) (interchain with G-Cter in ubiquitin); alternate. The chain crosses the membrane as a beta stranded span at residues H284–E293.

The protein belongs to the eukaryotic mitochondrial porin family. In terms of assembly, monomer, homodimer and higher order oligomers; formation of higher order structures is necessary for scramblase activity. Interacts with ARMC12 in a TBC1D21-dependent manner. Interacts with KLC3. Interacts with SPATA33. Interacts with PPP3CC in a SPATA33-dependent manner. In terms of processing, ubiquitinated by PRKN during mitophagy, leading to its degradation and enhancement of mitophagy. Deubiquitinated by USP30.

The protein resides in the mitochondrion outer membrane. The protein localises to the membrane. The catalysed reaction is chloride(in) = chloride(out). It carries out the reaction K(+)(in) = K(+)(out). The enzyme catalyses a 1,2-diacyl-sn-glycero-3-phospho-L-serine(in) = a 1,2-diacyl-sn-glycero-3-phospho-L-serine(out). It catalyses the reaction a 1,2-diacyl-sn-glycero-3-phosphocholine(in) = a 1,2-diacyl-sn-glycero-3-phosphocholine(out). The catalysed reaction is a 1,2-diacyl-sn-glycero-3-phospho-(1D-myo-inositol)(in) = a 1,2-diacyl-sn-glycero-3-phospho-(1D-myo-inositol)(out). Functionally, non-selective voltage-gated ion channel that mediates the transport of anions and cations through the mitochondrion outer membrane and plasma membrane. The channel adopts an open conformation at zero mV and a closed conformation at both positive and negative potentials. There are two populations of channels; the main that functions in a lower open-state conductance with lower ion selectivity, that switch, in a voltage-dependent manner, from the open to a low-conducting 'closed' state and the other that has a normal ion selectivity in the typical high conductance, 'open' state. Binds various lipids, including the sphingolipid ceramide, the phospholipid phosphatidylcholine, and the sterols cholesterol and oxysterol. Binding of ceramide promotes the mitochondrial outer membrane permeabilization (MOMP) apoptotic pathway. In terms of biological role, catalyzes the scrambling of phospholipids across the outer mitochondrial membrane; the mechanism is unrelated to channel activity and is capable of translocating both anionic and zwitterionic phospholipids. This is Non-selective voltage-gated ion channel VDAC2 from Sus scrofa (Pig).